We begin with the raw amino-acid sequence, 55 residues long: Large ribosomal subunit protein bL33 (55 aa).

It belongs to the bacterial ribosomal protein bL33 family.

The polypeptide is Large ribosomal subunit protein bL33 (Aliivibrio salmonicida (strain LFI1238) (Vibrio salmonicida (strain LFI1238))).